Consider the following 203-residue polypeptide: Holliday junction branch migration complex subunit RuvA (203 aa).

The interval 1-63 is domain I; sequence MIGKLSGKID…EEHIHLYGFL (63 aa). Residues 64-142 are domain II; it reads TLEEKNFFNL…KISSGSVIIK (79 aa). Positions 143–149 are flexible linker; sequence DSLNIKN. Residues 150 to 203 form a domain III region; it reads ITPVASNEVIKALVNLGFSRFEAQNAVQGIIIQNPEISIDELIKTALKNRNAGL.

It belongs to the RuvA family. In terms of assembly, homotetramer. Forms an RuvA(8)-RuvB(12)-Holliday junction (HJ) complex. HJ DNA is sandwiched between 2 RuvA tetramers; dsDNA enters through RuvA and exits via RuvB. An RuvB hexamer assembles on each DNA strand where it exits the tetramer. Each RuvB hexamer is contacted by two RuvA subunits (via domain III) on 2 adjacent RuvB subunits; this complex drives branch migration. In the full resolvosome a probable DNA-RuvA(4)-RuvB(12)-RuvC(2) complex forms which resolves the HJ.

Its subcellular location is the cytoplasm. Its function is as follows. The RuvA-RuvB-RuvC complex processes Holliday junction (HJ) DNA during genetic recombination and DNA repair, while the RuvA-RuvB complex plays an important role in the rescue of blocked DNA replication forks via replication fork reversal (RFR). RuvA specifically binds to HJ cruciform DNA, conferring on it an open structure. The RuvB hexamer acts as an ATP-dependent pump, pulling dsDNA into and through the RuvAB complex. HJ branch migration allows RuvC to scan DNA until it finds its consensus sequence, where it cleaves and resolves the cruciform DNA. The polypeptide is Holliday junction branch migration complex subunit RuvA (Rickettsia felis (strain ATCC VR-1525 / URRWXCal2) (Rickettsia azadi)).